Here is a 598-residue protein sequence, read N- to C-terminus: UvrABC system protein C (598 aa).

One can recognise a GIY-YIG domain in the interval Q11–I91. One can recognise a UVR domain in the interval K195 to T230.

The protein belongs to the UvrC family. As to quaternary structure, interacts with UvrB in an incision complex.

It is found in the cytoplasm. Its function is as follows. The UvrABC repair system catalyzes the recognition and processing of DNA lesions. UvrC both incises the 5' and 3' sides of the lesion. The N-terminal half is responsible for the 3' incision and the C-terminal half is responsible for the 5' incision. The chain is UvrABC system protein C from Methanosphaera stadtmanae (strain ATCC 43021 / DSM 3091 / JCM 11832 / MCB-3).